The chain runs to 308 residues: Glutaminase (308 aa).

Substrate-binding residues include S66, N117, E161, N168, Y192, Y244, and V262.

It belongs to the glutaminase family. As to quaternary structure, homotetramer.

It carries out the reaction L-glutamine + H2O = L-glutamate + NH4(+). The protein is Glutaminase of Shigella dysenteriae serotype 1 (strain Sd197).